The primary structure comprises 148 residues: Protein E6 (148 aa).

2 zinc fingers span residues 29–65 and 102–138; these read CVFCTKELTSPELAAFCIRELNVVWKSGAPYGACARC and CYMCHKPLVREEKDKHRNEKRRLHKISGYWRGSCLYC.

Belongs to the papillomaviridae E6 protein family. In terms of assembly, forms homodimers. Interacts with ubiquitin-protein ligase UBE3A/E6-AP; this interaction stimulates UBE3A ubiquitin activity. Interacts with host TP53 and EP300; this interaction inhibits TP53 activity.

The protein resides in the host cytoplasm. Its subcellular location is the host nucleus. Functionally, plays a major role in the induction and maintenance of cellular transformation. E6 associates with host UBE3A/E6-AP ubiquitin-protein ligase and modulates its activity. Sequesters tumor suppressor TP53 in the host cytoplasm and modulates its activity by interacting with host EP300 that results in the reduction of TP53 acetylation and activation. In turn, apoptosis induced by DNA damage is inhibited. E6 also protects host keratinocytes from apoptosis by mediating the degradation of host BAK1. May also inhibit host immune response. The chain is Protein E6 from Homo sapiens (Human).